The following is a 310-amino-acid chain: Protein CUP-SHAPED COTYLEDON 1 (310 aa).

An NAC domain is found at 20-172 (MPPGFRFHPT…EWVLCKVCLK (153 aa)). The DNA-binding element occupies 119–178 (LGMKKTLVFYKGRAPKGEKSCWVMHEYRLDGKFSYHYISSSAKDEWVLCKVCLKSGVVSR). Involved in transactivation activity regions lie at residues 179–210 (ETNL…NTFA) and 306–310 (WPFTL).

In terms of tissue distribution, expressed in inflorescence stems, rosette leaves, aerial parts of seedlings, flowers, floral buds and roots.

Its subcellular location is the nucleus. Functionally, transcription activator of STM and KNAT6. Involved in molecular mechanisms regulating shoot apical meristem (SAM) formation during embryogenesis and organ separation. Required for the fusion of septa of gynoecia along the length of the ovaries. Activates the shoot formation in callus in a STM-dependent manner. Seems to act as an inhibitor of cell division. This is Protein CUP-SHAPED COTYLEDON 1 (NAC054) from Arabidopsis thaliana (Mouse-ear cress).